The following is a 388-amino-acid chain: Succinate--CoA ligase [ADP-forming] subunit beta (388 aa).

The ATP-grasp domain maps to 9–244 (KELFARRGLP…VTQEDAREAH (236 aa)). ATP is bound by residues Lys-46, 53-55 (GRG), Glu-99, Thr-102, and Glu-107. Positions 199 and 213 each coordinate Mg(2+). Substrate is bound by residues Asn-264 and 321–323 (GIV).

Belongs to the succinate/malate CoA ligase beta subunit family. In terms of assembly, heterotetramer of two alpha and two beta subunits. Mg(2+) is required as a cofactor.

The catalysed reaction is succinate + ATP + CoA = succinyl-CoA + ADP + phosphate. The enzyme catalyses GTP + succinate + CoA = succinyl-CoA + GDP + phosphate. Its pathway is carbohydrate metabolism; tricarboxylic acid cycle; succinate from succinyl-CoA (ligase route): step 1/1. Succinyl-CoA synthetase functions in the citric acid cycle (TCA), coupling the hydrolysis of succinyl-CoA to the synthesis of either ATP or GTP and thus represents the only step of substrate-level phosphorylation in the TCA. The beta subunit provides nucleotide specificity of the enzyme and binds the substrate succinate, while the binding sites for coenzyme A and phosphate are found in the alpha subunit. The chain is Succinate--CoA ligase [ADP-forming] subunit beta from Hamiltonella defensa subsp. Acyrthosiphon pisum (strain 5AT).